The chain runs to 269 residues: Formamidopyrimidine-DNA glycosylase (269 aa).

Pro2 acts as the Schiff-base intermediate with DNA in catalysis. The Proton donor role is filled by Glu3. Lys58 (proton donor; for beta-elimination activity) is an active-site residue. 3 residues coordinate DNA: His91, Arg110, and Lys150. The FPG-type zinc-finger motif lies at 235–269; that stretch reads SVYGCKNKKCYRCKGIIIKFVQNQRSTFYCKKCQT. The Proton donor; for delta-elimination activity role is filled by Arg259.

Belongs to the FPG family. In terms of assembly, monomer. Zn(2+) serves as cofactor.

The catalysed reaction is Hydrolysis of DNA containing ring-opened 7-methylguanine residues, releasing 2,6-diamino-4-hydroxy-5-(N-methyl)formamidopyrimidine.. The enzyme catalyses 2'-deoxyribonucleotide-(2'-deoxyribose 5'-phosphate)-2'-deoxyribonucleotide-DNA = a 3'-end 2'-deoxyribonucleotide-(2,3-dehydro-2,3-deoxyribose 5'-phosphate)-DNA + a 5'-end 5'-phospho-2'-deoxyribonucleoside-DNA + H(+). Its function is as follows. Involved in base excision repair of DNA damaged by oxidation or by mutagenic agents. Acts as a DNA glycosylase that recognizes and removes damaged bases. Has a preference for oxidized purines, such as 7,8-dihydro-8-oxoguanine (8-oxoG). Has AP (apurinic/apyrimidinic) lyase activity and introduces nicks in the DNA strand. Cleaves the DNA backbone by beta-delta elimination to generate a single-strand break at the site of the removed base with both 3'- and 5'-phosphates. In Vesicomyosocius okutanii subsp. Calyptogena okutanii (strain HA), this protein is Formamidopyrimidine-DNA glycosylase.